We begin with the raw amino-acid sequence, 24 residues long: Frenatin-4 (24 aa).

As to expression, expressed by the skin glands.

It localises to the secreted. In terms of biological role, very weak antimicrobial peptide since it does not show activity below 100 ug/ml against Bacillus cereus, Escherichia coli, Leuconostoc mesenteroides, Micrococcus luteus, Pastewella haemolytica, Staphylococcus aureus, Streptococcus faecalis and Streptococcus uberis. The sequence is that of Frenatin-4 from Nyctimystes infrafrenatus (White-lipped tree frog).